Consider the following 425-residue polypeptide: Keratin, type II cytoskeletal I (425 aa).

The coil 1A stretch occupies residues 1 to 16; sequence FLEQQNKVLETKWKLL. The region spanning 1–296 is the IF rod domain; the sequence is FLEQQNKVLE…YMLEGEEGRI (296 aa). Positions 17 to 37 are linker 1; that stretch reads QEQGTKGTTKRANLDPLFEKY. The tract at residues 38-129 is coil 1B; sequence IADLKKYLDN…TRDAAELSQV (92 aa). Residues 130-153 are linker 12; sequence HDQVTDTSVVLTMDNNRDLNLDSI. Positions 154–292 are coil 2; that stretch reads IKEVKCQYEQ…STYRYMLEGE (139 aa). The interval 293–425 is tail; the sequence is EGRISGQIVN…STTSTTKKTY (133 aa).

Belongs to the intermediate filament family. As to quaternary structure, heterotetramer of two type I and two type II keratins.

The protein is Keratin, type II cytoskeletal I of Xenopus laevis (African clawed frog).